Consider the following 77-residue polypeptide: Large ribosomal subunit protein bL31 (77 aa).

The protein belongs to the bacterial ribosomal protein bL31 family. Type A subfamily. Part of the 50S ribosomal subunit.

Functionally, binds the 23S rRNA. The protein is Large ribosomal subunit protein bL31 of Synechococcus elongatus (strain ATCC 33912 / PCC 7942 / FACHB-805) (Anacystis nidulans R2).